A 653-amino-acid polypeptide reads, in one-letter code: Probable syringafactin export ATP-binding/permease protein SyfD (653 aa).

An ABC transporter domain is found at 6-244 (LELNGVTRRF…NEKTTERLPT (239 aa)). 42 to 49 (GASGSGKS) contacts ATP. The next 5 helical transmembrane spans lie at 252–272 (LMAN…ALIS), 278–298 (LLTM…VAIG), 526–546 (LALL…IGVM), 583–603 (MVCL…GYVF), and 616–636 (LGSI…FGFV).

This sequence belongs to the ABC transporter superfamily. Macrolide exporter (TC 3.A.1.122) family. In terms of assembly, probably part of a tripartite efflux system, which is composed of an inner membrane transporter, a periplasmic membrane fusion protein, and an outer membrane component.

The protein localises to the cell inner membrane. Probably involved in the export of syringafactins. This Pseudomonas syringae pv. syringae (strain B728a) protein is Probable syringafactin export ATP-binding/permease protein SyfD.